Consider the following 892-residue polypeptide: MTLITDSESIGVCESSYTPEEERRIVTELNNEAEADLKEGNLYFVISNRWYTRWQRFVGLLTEEFRSGEPSEVTRPGPIDNHDIIDSESDASDPQLRMMLEEGVDYTLVQQEVWRKLVKWYKGGPPVPRKLISQGFYTKSFSVEVYLLCLTLTDSRDESTTIIRLSKQASIGQLYEMVCAGKGVAKEKARIWDYFEKKKSVLLDPSSEQSVEEAGLQFNQDILLEVDGSASSQFVMSLAENELAMVPLEPMRSDAMDIVRGGGTLSNGHSNGFKFSFFGRNTFKDDVSSRTFGKGEKRGLGGLQNLGNTCFMNSTLQCLAHTPPIVEYFLQDYRSDINAKNPLGMRGELAIAFGELLRKLWSSGQNTVAPRAFKTKLARFAPQFSGYNQHDSQEMLAFLLDGLHEDLNKVKRKPYIEAKDSDGRPDDEVAEEKWKYHKARNDSVIVDVFQGQYKSTLVCPDCGKISITFDPFMYLSLPLPSSRTRSMTVTVFYGDGSHLPMPYTVTVPKDGSCRDLSNALGTACCLDNDESLLLAEVYDHKVFKYYENPRELLNGIKDNEHIVAYRFKQMHKGPGKVKLEILHGEQEKSSDRGPKCFGTPLVTYINKEPLSGTDIATSISGLLSPLRRVHMSCVVNSGNENGHVPDESSRSILSRDTETEDNDRELSLSLLRDYYSFNLQPLESDSVVNPGSVTKVLVKWNEKEHEKYDSSYLNDLPKVHKNVLAKKTMQEGISLFSCLEAFLAEEPLGPDDMWYCPGCKEHRQANKKLDLWKLPDILVFHLKRFTYSRYFKNKIDTLVNFHIHDLDLSKYVKNEDGQSYLYELYAISNHYGGLGGGHYTAYAKLMDETKWYNFDDSRVSAVNESEIKTSAAYVLFYQRVKSDSETSDMKMD.

The 116-residue stretch at 17–132 folds into the DUSP domain; sequence YTPEEERRIV…GGPPVPRKLI (116 aa). The tract at residues 69-89 is disordered; it reads EPSEVTRPGPIDNHDIIDSES. The 580-residue stretch at 301–880 folds into the USP domain; the sequence is GGLQNLGNTC…AAYVLFYQRV (580 aa). The Nucleophile role is filled by cysteine 310. The interval 636–660 is disordered; it reads NSGNENGHVPDESSRSILSRDTETE. Over residues 643–657 the composition is skewed to basic and acidic residues; sequence HVPDESSRSILSRDT. Histidine 838 functions as the Proton acceptor in the catalytic mechanism.

It belongs to the peptidase C19 family.

The catalysed reaction is Thiol-dependent hydrolysis of ester, thioester, amide, peptide and isopeptide bonds formed by the C-terminal Gly of ubiquitin (a 76-residue protein attached to proteins as an intracellular targeting signal).. Recognizes and hydrolyzes the peptide bond at the C-terminal Gly of ubiquitin. Involved in the processing of poly-ubiquitin precursors as well as that of ubiquitinated proteins. The polypeptide is Putative ubiquitin carboxyl-terminal hydrolase 11 (UBP11) (Arabidopsis thaliana (Mouse-ear cress)).